Reading from the N-terminus, the 267-residue chain is Undecaprenyl-diphosphatase (267 aa).

A run of 8 helical transmembrane segments spans residues 1-21 (MSYF…FLPI), 39-59 (QGLA…VIYF), 83-103 (AKLA…GLVM), 111-131 (LRSA…LWWV), 144-164 (AGWK…IPGT), 189-209 (FLMS…KLVT), 218-238 (FLLT…HLFL), and 246-266 (MTPF…YLLM).

It belongs to the UppP family.

It localises to the cell inner membrane. The enzyme catalyses di-trans,octa-cis-undecaprenyl diphosphate + H2O = di-trans,octa-cis-undecaprenyl phosphate + phosphate + H(+). Its function is as follows. Catalyzes the dephosphorylation of undecaprenyl diphosphate (UPP). Confers resistance to bacitracin. This Vibrio vulnificus (strain CMCP6) protein is Undecaprenyl-diphosphatase.